Reading from the N-terminus, the 108-residue chain is Nucleoid-associated protein Csal_1459 (108 aa).

Residues 84 to 93 (EETSRGRMEE) show a composition bias toward basic and acidic residues. The interval 84 to 108 (EETSRGRMEEATEGMNLPPGFKMPF) is disordered.

Belongs to the YbaB/EbfC family. As to quaternary structure, homodimer.

It is found in the cytoplasm. Its subcellular location is the nucleoid. Functionally, binds to DNA and alters its conformation. May be involved in regulation of gene expression, nucleoid organization and DNA protection. The chain is Nucleoid-associated protein Csal_1459 from Chromohalobacter salexigens (strain ATCC BAA-138 / DSM 3043 / CIP 106854 / NCIMB 13768 / 1H11).